A 680-amino-acid polypeptide reads, in one-letter code: 1-deoxy-D-xylulose-5-phosphate synthase (680 aa).

Low complexity predominate over residues 1–17; that stretch reads MQQSPHSPQSQSLSASA. Residues 1–20 are disordered; the sequence is MQQSPHSPQSQSLSASAVDS. Residues His-113 and 154-156 each bind thiamine diphosphate; that span reads GHS. Asp-185 is a Mg(2+) binding site. Thiamine diphosphate contacts are provided by residues 186-187, Asn-214, Phe-323, and Glu-408; that span reads GA. Mg(2+) is bound at residue Asn-214.

The protein belongs to the transketolase family. DXPS subfamily. In terms of assembly, homodimer. It depends on Mg(2+) as a cofactor. Thiamine diphosphate serves as cofactor.

The enzyme catalyses D-glyceraldehyde 3-phosphate + pyruvate + H(+) = 1-deoxy-D-xylulose 5-phosphate + CO2. It functions in the pathway metabolic intermediate biosynthesis; 1-deoxy-D-xylulose 5-phosphate biosynthesis; 1-deoxy-D-xylulose 5-phosphate from D-glyceraldehyde 3-phosphate and pyruvate: step 1/1. Functionally, catalyzes the acyloin condensation reaction between C atoms 2 and 3 of pyruvate and glyceraldehyde 3-phosphate to yield 1-deoxy-D-xylulose-5-phosphate (DXP). The sequence is that of 1-deoxy-D-xylulose-5-phosphate synthase from Psychrobacter cryohalolentis (strain ATCC BAA-1226 / DSM 17306 / VKM B-2378 / K5).